The sequence spans 701 residues: Ubiquitin thioesterase zranb1-B (701 aa).

RanBP2-type zinc fingers lie at residues 3–33 (EDGI…PRPS), 79–108 (TSSK…QRRT), and 143–173 (IKGQ…PTPN). Cys10, Cys13, Cys24, Cys27, Cys85, Cys88, Cys99, and Cys102 together coordinate Zn(2+). Residues 108-121 (TRSPTESPQSSGSG) show a composition bias toward polar residues. Residues 108–129 (TRSPTESPQSSGSGLRSIPGPI) form a disordered region. Positions 150, 153, 164, and 167 each coordinate Zn(2+). Positions 197-220 (RWRGGCSSSNSQRRSPPTSKRDSD) are disordered. Residues 202 to 214 (CSSSNSQRRSPPT) are compositionally biased toward polar residues. ANK repeat units lie at residues 253–283 (RKTD…SGGD) and 306–333 (YTLV…QHAA). Positions 425-585 (LYALWNRTAG…RGHFSALVAM (161 aa)) constitute an OTU domain. Cys436 (nucleophile) is an active-site residue. The active-site Proton acceptor is the His578.

The protein belongs to the peptidase C64 family.

Its subcellular location is the cytoplasm. The protein localises to the nucleus. The enzyme catalyses Thiol-dependent hydrolysis of ester, thioester, amide, peptide and isopeptide bonds formed by the C-terminal Gly of ubiquitin (a 76-residue protein attached to proteins as an intracellular targeting signal).. Its function is as follows. Ubiquitin thioesterase, which specifically hydrolyzes 'Lys-29'-linked and 'Lys-33'-linked diubiquitin. Also cleaves 'Lys-63'-linked chains, but with 40-fold less efficiency compared to 'Lys-29'-linked ones. Positive regulator of the Wnt signaling pathway that deubiquitinates apc protein, a negative regulator of Wnt-mediated transcription. Acts as a regulator of autophagy by mediating deubiquitination of pik3c3/vps34, thereby promoting autophagosome maturation. Plays a role in the regulation of cell morphology and cytoskeletal organization. Required in the stress fiber dynamics and cell migration. In Xenopus laevis (African clawed frog), this protein is Ubiquitin thioesterase zranb1-B (zranb1-b).